The sequence spans 365 residues: Sesquiterpene synthase 3 (365 aa).

Mg(2+) is bound by residues Asp-117, Asn-253, Ser-257, and Glu-261. The short motif at 117–121 (DDWSD) is the DDXXD motif element. The NSE/DTE motif signature appears at 253-261 (NDILSYNRE). (2E,6E)-farnesyl diphosphate contacts are provided by Arg-341 and Tyr-342.

The protein belongs to the terpene synthase family. The cofactor is Mg(2+).

It catalyses the reaction (2E,6E)-farnesyl diphosphate = delta-cadinene + diphosphate. In terms of biological role, terpene cyclase that catalyzes the cyclization of farnesyl diphosphate (FPP) to various sesquiterpenes, including beta-elemene gamma-cadinene, delta-cadinene, and alpha-cadinene. The polypeptide is Sesquiterpene synthase 3 (Postia placenta (strain ATCC 44394 / Madison 698-R) (Brown rot fungus)).